The chain runs to 695 residues: Elongation factor G 1 (695 aa).

One can recognise a tr-type G domain in the interval S6–T282. GTP contacts are provided by residues A15–T22, D82–H86, and N136–D139.

Belongs to the TRAFAC class translation factor GTPase superfamily. Classic translation factor GTPase family. EF-G/EF-2 subfamily.

The protein localises to the cytoplasm. Its function is as follows. Catalyzes the GTP-dependent ribosomal translocation step during translation elongation. During this step, the ribosome changes from the pre-translocational (PRE) to the post-translocational (POST) state as the newly formed A-site-bound peptidyl-tRNA and P-site-bound deacylated tRNA move to the P and E sites, respectively. Catalyzes the coordinated movement of the two tRNA molecules, the mRNA and conformational changes in the ribosome. In Treponema pallidum (strain Nichols), this protein is Elongation factor G 1 (fusA).